A 195-amino-acid chain; its full sequence is Imidazoleglycerol-phosphate dehydratase (195 aa).

It belongs to the imidazoleglycerol-phosphate dehydratase family.

Its subcellular location is the cytoplasm. It catalyses the reaction D-erythro-1-(imidazol-4-yl)glycerol 3-phosphate = 3-(imidazol-4-yl)-2-oxopropyl phosphate + H2O. It functions in the pathway amino-acid biosynthesis; L-histidine biosynthesis; L-histidine from 5-phospho-alpha-D-ribose 1-diphosphate: step 6/9. This is Imidazoleglycerol-phosphate dehydratase from Burkholderia vietnamiensis (strain G4 / LMG 22486) (Burkholderia cepacia (strain R1808)).